A 188-amino-acid polypeptide reads, in one-letter code: Elongation factor P (188 aa).

This sequence belongs to the elongation factor P family.

It is found in the cytoplasm. The protein operates within protein biosynthesis; polypeptide chain elongation. Involved in peptide bond synthesis. Stimulates efficient translation and peptide-bond synthesis on native or reconstituted 70S ribosomes in vitro. Probably functions indirectly by altering the affinity of the ribosome for aminoacyl-tRNA, thus increasing their reactivity as acceptors for peptidyl transferase. This chain is Elongation factor P, found in Saccharopolyspora erythraea (strain ATCC 11635 / DSM 40517 / JCM 4748 / NBRC 13426 / NCIMB 8594 / NRRL 2338).